The following is a 393-amino-acid chain: NAD(P)H-quinone oxidoreductase subunit H, chloroplastic (393 aa).

This sequence belongs to the complex I 49 kDa subunit family. As to quaternary structure, NDH is composed of at least 16 different subunits, 5 of which are encoded in the nucleus.

The protein resides in the plastid. Its subcellular location is the chloroplast thylakoid membrane. It catalyses the reaction a plastoquinone + NADH + (n+1) H(+)(in) = a plastoquinol + NAD(+) + n H(+)(out). It carries out the reaction a plastoquinone + NADPH + (n+1) H(+)(in) = a plastoquinol + NADP(+) + n H(+)(out). Functionally, NDH shuttles electrons from NAD(P)H:plastoquinone, via FMN and iron-sulfur (Fe-S) centers, to quinones in the photosynthetic chain and possibly in a chloroplast respiratory chain. The immediate electron acceptor for the enzyme in this species is believed to be plastoquinone. Couples the redox reaction to proton translocation, and thus conserves the redox energy in a proton gradient. This chain is NAD(P)H-quinone oxidoreductase subunit H, chloroplastic, found in Saccharum hybrid (Sugarcane).